Here is a 392-residue protein sequence, read N- to C-terminus: Leucine aminopeptidase 1 (392 aa).

Positions 1 to 18 are cleaved as a signal peptide; the sequence is MKFSQASLLAACLPAISA. The propeptide occupies 19–82; it reads RFIETAEADN…LGSTRLNAQT (64 aa). The N-linked (GlcNAc...) asparagine glycan is linked to asparagine 174. Zn(2+) contacts are provided by histidine 182, aspartate 201, glutamate 240, and aspartate 267. Cysteine 316 and cysteine 320 are oxidised to a cystine. Residue histidine 349 coordinates Zn(2+).

Belongs to the peptidase M28 family. M28E subfamily. As to quaternary structure, monomer. Zn(2+) serves as cofactor.

The protein resides in the secreted. Extracellular aminopeptidase that allows assimilation of proteinaceous substrates. This is Leucine aminopeptidase 1 (LAP1) from Fusarium vanettenii (strain ATCC MYA-4622 / CBS 123669 / FGSC 9596 / NRRL 45880 / 77-13-4) (Fusarium solani subsp. pisi).